Reading from the N-terminus, the 140-residue chain is Putative nickel-responsive regulator (140 aa).

His-81, His-92, His-94, and Cys-100 together coordinate Ni(2+).

This sequence belongs to the transcriptional regulatory CopG/NikR family. Ni(2+) serves as cofactor.

Its function is as follows. Transcriptional regulator. This is Putative nickel-responsive regulator from Methanococcoides burtonii (strain DSM 6242 / NBRC 107633 / OCM 468 / ACE-M).